Reading from the N-terminus, the 170-residue chain is Ureidoglycolate lyase (170 aa).

This sequence belongs to the ureidoglycolate lyase family. In terms of assembly, homodimer. Requires Ni(2+) as cofactor.

The catalysed reaction is (S)-ureidoglycolate = urea + glyoxylate. Its pathway is nitrogen metabolism; (S)-allantoin degradation. Functionally, catalyzes the catabolism of the allantoin degradation intermediate (S)-ureidoglycolate, generating urea and glyoxylate. Involved in the utilization of allantoin as nitrogen source. The chain is Ureidoglycolate lyase from Stutzerimonas stutzeri (strain A1501) (Pseudomonas stutzeri).